Consider the following 452-residue polypeptide: Translation initiation factor eIF2B subunit gamma (452 aa).

Methionine 1 carries the post-translational modification N-acetylmethionine. A Phosphoserine modification is found at serine 261.

This sequence belongs to the eIF-2B gamma/epsilon subunits family. As to quaternary structure, component of the translation initiation factor 2B (eIF2B) complex which is a heterodecamer of two sets of five different subunits: alpha, beta, gamma, delta and epsilon. Subunits alpha, beta and delta comprise a regulatory subcomplex and subunits epsilon and gamma comprise a catalytic subcomplex. Within the complex, the hexameric regulatory complex resides at the center, with the two heterodimeric catalytic subcomplexes bound on opposite sides.

It localises to the cytoplasm. Its subcellular location is the cytosol. Activated by the chemical integrated stress response (ISR) inhibitor ISRIB which stimulates guanine nucleotide exchange factor activity for both phosphorylated and unphosphorylated eIF2. In terms of biological role, acts as a component of the translation initiation factor 2B (eIF2B) complex, which catalyzes the exchange of GDP for GTP on the eukaryotic initiation factor 2 (eIF2) complex gamma subunit. Its guanine nucleotide exchange factor activity is repressed when bound to eIF2 complex phosphorylated on the alpha subunit, thereby limiting the amount of methionyl-initiator methionine tRNA available to the ribosome and consequently global translation is repressed. The sequence is that of Translation initiation factor eIF2B subunit gamma (EIF2B3) from Bos taurus (Bovine).